The chain runs to 284 residues: P2R1A-PPP2R2A-interacting phosphatase regulator 1 (284 aa).

The disordered stretch occupies residues 1-65 (MAQEKMELDL…RRNSTTFPSR (65 aa)). Positions 20-29 (EGGGPGGGGL) are enriched in gly residues. Ser-32 bears the Phosphoserine mark. Ser-34 bears the Phosphoserine; by CHEK1 mark. Residues Ser-42, Ser-45, Ser-59, and Ser-73 each carry the phosphoserine modification. Residue Lys-86 forms a Glycyl lysine isopeptide (Lys-Gly) (interchain with G-Cter in SUMO1) linkage. A phosphoserine mark is found at Ser-140 and Ser-144. At Thr-146 the chain carries Phosphothreonine. The tract at residues 164 to 185 (SNGLPPSPIPSPTTRFTTRRSQ) is disordered. The span at 175-185 (PTTRFTTRRSQ) shows a compositional bias: low complexity. Ser-184 and Ser-186 each carry phosphoserine. The segment at 233–284 (GVCVSSDTLDGNSSSAGSSCNSPAKVSTTTDSPVSPAQAASPFIPVDELSSK) is disordered. A compositionally biased stretch (low complexity) spans 243–254 (GNSSSAGSSCNS). The segment covering 256–267 (AKVSTTTDSPVS) has biased composition (polar residues). Residues Ser-264, Ser-267, and Ser-273 each carry the phosphoserine modification.

Belongs to the FAM122 family. As to quaternary structure, interacts with PPP2CA and PPP2R1A. Interacts (via its N-terminus) with PPP2R2A; the interaction is direct and this interaction inhibits PP2A activity. The CHEK1-mediated Ser-34 phosphorylated form interacts with 14-3-3 proteins. In terms of processing, CHEK1-mediated phosphorylation at Ser-34 negatively regulates its ability to inhibit serine/threonine-protein phosphatase 2A (PP2A) activity. Phosphorylation leads to its release from the PP2A complex and its sequestration by 14-3-3 proteins in the cytoplasm resulting in its inability to translocate to the nucleus, where it otherwise inhibits PP2A.

Its subcellular location is the nucleus. It is found in the cytoplasm. Acts as an inhibitor of serine/threonine-protein phosphatase 2A (PP2A) activity. Inhibits PP2A activity by blocking the substrate binding site on PPP2R2A and the active site of PPP2CA. Potentiates ubiquitin-mediated proteasomal degradation of serine/threonine-protein phosphatase 2A catalytic subunit alpha (PPP2CA). Inhibits PP2A-mediated dephosphorylation of WEE1, promoting ubiquitin-mediated proteolysis of WEE1, thereby releasing G2/M checkpoint. The sequence is that of P2R1A-PPP2R2A-interacting phosphatase regulator 1 from Mus musculus (Mouse).